The chain runs to 213 residues: Kynurenine formamidase (213 aa).

Trp-18 is a substrate binding site. Zn(2+)-binding residues include His-48, His-52, and Asp-54. His-58 (proton donor/acceptor) is an active-site residue. Residues His-160 and Glu-172 each coordinate Zn(2+).

Belongs to the Cyclase 1 superfamily. KynB family. Homodimer. Zn(2+) is required as a cofactor.

The catalysed reaction is N-formyl-L-kynurenine + H2O = L-kynurenine + formate + H(+). It participates in amino-acid degradation; L-tryptophan degradation via kynurenine pathway; L-kynurenine from L-tryptophan: step 2/2. Its function is as follows. Catalyzes the hydrolysis of N-formyl-L-kynurenine to L-kynurenine, the second step in the kynurenine pathway of tryptophan degradation. In Burkholderia pseudomallei (strain 1106a), this protein is Kynurenine formamidase.